A 241-amino-acid chain; its full sequence is L-aspartate dehydrogenase (241 aa).

NAD(+) contacts are provided by residues 10 to 11 (NI), Asp-28, 56 to 57 (AS), 63 to 64 (EY), 78 to 79 (IS), Ala-109, and Asn-164. The active site involves His-193.

This sequence belongs to the L-aspartate dehydrogenase family. As to quaternary structure, homodimer.

It carries out the reaction L-aspartate + NADP(+) + H2O = oxaloacetate + NH4(+) + NADPH + H(+). It catalyses the reaction L-aspartate + NAD(+) + H2O = oxaloacetate + NH4(+) + NADH + H(+). It participates in cofactor biosynthesis; NAD(+) biosynthesis; iminoaspartate from L-aspartate (dehydrogenase route): step 1/1. With respect to regulation, competitively inhibited by L-malate and NH(4)(+). In terms of biological role, specifically catalyzes the NAD or NADP-dependent dehydrogenation of L-aspartate to iminoaspartate. Does not show aspartate oxidase activity. Is also able to catalyze the reverse reaction, i.e. the reductive amination of oxaloacetate. The sequence is that of L-aspartate dehydrogenase from Thermotoga maritima (strain ATCC 43589 / DSM 3109 / JCM 10099 / NBRC 100826 / MSB8).